Here is a 454-residue protein sequence, read N- to C-terminus: Peroxisome assembly protein 10 (454 aa).

Residues 1-23 (MATQPPPARPPPPLTSSPYPYAA) are Peroxisomal matrix-facing. A helical membrane pass occupies residues 24–53 (APDIIRAHQKDAYFQGVLANRLSDLHRRLR). Gly-54 is a topological domain (cytoplasmic). A helical membrane pass occupies residues 55–76 (ARSAHAWAAETRTFAAALYLCL). Over 77-132 (TTLLGNRTLGEEYCDLVQVEEAPSKLFASSSSKAADDHIYENGLGGGGDGGPLLPS) the chain is Peroxisomal matrix. The chain crosses the membrane as a helical span at residues 133–165 (LPRRAGYILTAIVLPHLASRALPSVRSAIRKRL). Topologically, residues 166 to 201 (QSRLATLSRRRQQTGTKSGSGRGGRGGGGGITEYRV) are cytoplasmic. Residues 171–194 (TLSRRRQQTGTKSGSGRGGRGGGG) are disordered. The span at 183–194 (SGSGRGGRGGGG) shows a compositional bias: gly residues. A helical membrane pass occupies residues 202–229 (LRYLLTHLTPLTSGAHFRAATLAVFYFT). At 230–276 (GAYYELSKWVWGLRYVFTTRAGRVVDDDHNRHHHSPQHGGGNGGRAG) the chain is on the peroxisomal matrix side. The chain crosses the membrane as a helical span at residues 277–296 (YEVLGVLLVVQMAVRAWLHV). Residues 297-454 (REQLSSGSVA…VQHILPLRAA (158 aa)) lie on the Cytoplasmic side of the membrane. The disordered stretch occupies residues 302–329 (SGSVAGGGGEEEEDGEDGFRERTAFGPG). Zn(2+)-binding residues include Cys-402, Cys-405, Cys-417, His-419, Cys-422, Cys-425, Cys-436, and Cys-439. The RING-type zinc finger occupies 402–440 (CTLCLEELKDPAATQCGHVFCWACIGDWVREKPECPLCR).

This sequence belongs to the pex2/pex10/pex12 family. In terms of assembly, component of the PEX2-PEX10-PEX12 retrotranslocation channel, composed of PEX2, PEX10 and PEX12.

It is found in the peroxisome membrane. The catalysed reaction is S-ubiquitinyl-[E2 ubiquitin-conjugating enzyme]-L-cysteine + [acceptor protein]-L-lysine = [E2 ubiquitin-conjugating enzyme]-L-cysteine + N(6)-ubiquitinyl-[acceptor protein]-L-lysine.. It functions in the pathway protein modification; protein ubiquitination. The E3 ubiquitin-protein ligase activity is stimulated by PEX12. Functionally, E3 ubiquitin-protein ligase component of a retrotranslocation channel required for peroxisome organization by mediating export of the PEX5 receptor from peroxisomes to the cytosol, thereby promoting PEX5 recycling. The retrotranslocation channel is composed of PEX2, PEX10 and PEX12; each subunit contributing transmembrane segments that coassemble into an open channel that specifically allows the passage of PEX5 through the peroxisomal membrane. PEX10 also regulates PEX5 recycling by acting as a E3 ubiquitin-protein ligase. When PEX5 recycling is compromised, PEX10 catalyzes polyubiquitination of PEX5 during its passage through the retrotranslocation channel, leading to its degradation. This Thermothelomyces thermophilus (strain ATCC 42464 / BCRC 31852 / DSM 1799) (Sporotrichum thermophile) protein is Peroxisome assembly protein 10.